The chain runs to 105 residues: Nitrogenase-stabilizing/protective protein NifW (105 aa).

It belongs to the NifW family. Homotrimer; associates with NifD.

In terms of biological role, may protect the nitrogenase Fe-Mo protein from oxidative damage. This Rhodospirillum centenum (strain ATCC 51521 / SW) protein is Nitrogenase-stabilizing/protective protein NifW.